The primary structure comprises 189 residues: Small ribosomal subunit protein uS5 (189 aa).

The S5 DRBM domain maps to 22–85 (FVDKLVAINR…EAAKRELIFV (64 aa)).

Belongs to the universal ribosomal protein uS5 family. Part of the 30S ribosomal subunit. Contacts proteins S4 and S8.

In terms of biological role, with S4 and S12 plays an important role in translational accuracy. Its function is as follows. Located at the back of the 30S subunit body where it stabilizes the conformation of the head with respect to the body. This is Small ribosomal subunit protein uS5 from Rhizobium etli (strain CIAT 652).